Consider the following 1049-residue polypeptide: Protein phosphatase Slingshot homolog 1 (1049 aa).

Polar residues predominate over residues 1–12 (MALVTLQRSPTP). A disordered region spans residues 1 to 28 (MALVTLQRSPTPSAASSSASNSELEAGS). An N-acetylalanine modification is found at Ala2. Low complexity predominate over residues 13 to 25 (SAASSSASNSELE). Ser37 and Ser57 each carry phosphoserine. One can recognise a DEK-C domain in the interval 249 to 304 (ERTERLIKAKLRSIMMSQDLENVTSKEIRNELEKQMNCNLKELKEFIDNEMLLILG). In terms of domain architecture, Tyrosine-protein phosphatase spans 308-449 (KPSLIFDHLY…LSEYEGILDA (142 aa)). The active-site Phosphocysteine intermediate is the Cys393. Positions 456-499 (KLWRQQTDSSLQQPVDDPAGPGDFLPETPDGTPESQLPFLDDAA) are disordered. The segment covering 458-468 (WRQQTDSSLQQ) has biased composition (polar residues). Ser515 carries the phosphoserine modification. Disordered regions lie at residues 544 to 603 (AAPP…RWGQ), 693 to 787 (HLAS…KPAK), 825 to 899 (HTKE…KSPP), and 923 to 955 (PTSSSMSSNLTRSSSSDSIHSVRGKPGLVKQRT). The span at 564 to 573 (CEKDVKKKLE) shows a compositional bias: basic and acidic residues. Ser576 bears the Phosphoserine mark. Residues 731 to 742 (GAALEPPASLLE) show a composition bias toward low complexity. The span at 772 to 787 (VIKEESSPKKDMKPAK) shows a compositional bias: basic and acidic residues. Ser897 carries the post-translational modification Phosphoserine. The tract at residues 897–1049 (SPPPFFYRLD…LKSPSWMSKS (153 aa)) is interaction with YWHAG. Residues 925–943 (SSSMSSNLTRSSSSDSIHS) show a composition bias toward low complexity. Ser978 bears the Phosphoserine mark. The disordered stretch occupies residues 989 to 1049 (TEDLSSEADP…LKSPSWMSKS (61 aa)). The span at 1001–1013 (VADSQDTTLSESS) shows a compositional bias: polar residues.

Belongs to the protein-tyrosine phosphatase family. Interacts with actin and this stimulates phosphatase activity. Also interacts with LIMK1 and with the 14-3-3 proteins YWHAB, YWHAG, YWHAQ, and YWHAZ. Interaction with 14-3-3 proteins inhibits phosphatase activity and also blocks recruitment to lamellipodia and stimulation by actin. In terms of processing, phosphorylated. Inhibitory phosphorylation by PAK4 promotes binding to YWHAZ. Phosphorylation at Ser-978 is decreased by stimuli which promote actin reorganization and lamellipodia formation. Can be dephosphorylated and activated by PPP3CA/calcineurin A. Phosphorylation decreases immediately prior to telophase.

It is found in the cytoplasm. Its subcellular location is the cytoskeleton. The protein resides in the cell projection. The protein localises to the lamellipodium. It localises to the cleavage furrow. It is found in the midbody. It carries out the reaction O-phospho-L-tyrosyl-[protein] + H2O = L-tyrosyl-[protein] + phosphate. It catalyses the reaction O-phospho-L-seryl-[protein] + H2O = L-seryl-[protein] + phosphate. The enzyme catalyses O-phospho-L-threonyl-[protein] + H2O = L-threonyl-[protein] + phosphate. Its function is as follows. Protein phosphatase which regulates actin filament dynamics. Dephosphorylates and activates the actin binding/depolymerizing factor cofilin, which subsequently binds to actin filaments and stimulates their disassembly. Inhibitory phosphorylation of cofilin is mediated by LIMK1, which may also be dephosphorylated and inactivated by this protein. This chain is Protein phosphatase Slingshot homolog 1, found in Homo sapiens (Human).